Reading from the N-terminus, the 413-residue chain is Replication factor C large subunit (413 aa).

An ATP-binding site is contributed by 54 to 61 (GPPGSGKT).

Belongs to the activator 1 small subunits family. RfcL subfamily. Heteromultimer composed of small subunits (RfcS) and large subunits (RfcL).

Its function is as follows. Part of the RFC clamp loader complex which loads the PCNA sliding clamp onto DNA. In Thermofilum pendens (strain DSM 2475 / Hrk 5), this protein is Replication factor C large subunit.